Reading from the N-terminus, the 293-residue chain is Fructose-bisphosphate aldolase class 1 (293 aa).

Residue Glu-176 is the Proton acceptor of the active site. The active-site Schiff-base intermediate with dihydroxyacetone-P is the Lys-211.

The protein belongs to the class I fructose-bisphosphate aldolase family.

The enzyme catalyses beta-D-fructose 1,6-bisphosphate = D-glyceraldehyde 3-phosphate + dihydroxyacetone phosphate. Its pathway is carbohydrate degradation; glycolysis; D-glyceraldehyde 3-phosphate and glycerone phosphate from D-glucose: step 4/4. The protein is Fructose-bisphosphate aldolase class 1 of Porphyromonas gingivalis (strain ATCC 33277 / DSM 20709 / CIP 103683 / JCM 12257 / NCTC 11834 / 2561).